We begin with the raw amino-acid sequence, 475 residues long: Sulfate adenylyltransferase subunit 1 (475 aa).

In terms of domain architecture, tr-type G spans 25-241; it reads KSLLRFLTCG…LENIEIQRVV (217 aa). The G1 stretch occupies residues 34 to 41; it reads GSVDDGKS. 34–41 provides a ligand contact to GTP; sequence GSVDDGKS. The segment at 92–96 is G2; that stretch reads GITID. A G3 region spans residues 113 to 116; the sequence is DTPG. GTP contacts are provided by residues 113 to 117 and 168 to 171; these read DTPGH and NKMD. The interval 168 to 171 is G4; that stretch reads NKMD. A G5 region spans residues 206–208; the sequence is SAL.

This sequence belongs to the TRAFAC class translation factor GTPase superfamily. Classic translation factor GTPase family. CysN/NodQ subfamily. Heterodimer composed of CysD, the smaller subunit, and CysN.

The catalysed reaction is sulfate + ATP + H(+) = adenosine 5'-phosphosulfate + diphosphate. It functions in the pathway sulfur metabolism; hydrogen sulfide biosynthesis; sulfite from sulfate: step 1/3. Functionally, with CysD forms the ATP sulfurylase (ATPS) that catalyzes the adenylation of sulfate producing adenosine 5'-phosphosulfate (APS) and diphosphate, the first enzymatic step in sulfur assimilation pathway. APS synthesis involves the formation of a high-energy phosphoric-sulfuric acid anhydride bond driven by GTP hydrolysis by CysN coupled to ATP hydrolysis by CysD. This chain is Sulfate adenylyltransferase subunit 1, found in Cronobacter sakazakii (strain ATCC BAA-894) (Enterobacter sakazakii).